The following is a 1327-amino-acid chain: Vascular endothelial growth factor receptor 1 (1327 aa).

The signal sequence occupies residues 1–24 (MPRQLLSGTVLLGAAFLLAGSTSG). Residues 25–749 (SKLKVPVLSV…GTVERSNLEL (725 aa)) lie on the Extracellular side of the membrane. Ig-like C2-type domains follow at residues 30–121 (PVLS…SIVY), 120–222 (VYVF…HRET), 227–323 (DIKL…TTVI), 331–417 (NLKR…LTVT), 424–545 (PQIY…RNVS), 552–644 (PSGF…KDVS), and 651–737 (PALL…AYVT). Residues Asn48, Asn73, Asn82, Asn98, and Asn125 are each glycosylated (N-linked (GlcNAc...) asparagine). Cys51 and Cys105 are disulfide-bonded. A disulfide bridge connects residues Cys154 and Cys203. A glycan (N-linked (GlcNAc...) asparagine) is linked at Asn247. Cys248 and Cys307 form a disulfide bridge. Residues Asn319, Asn383, Asn398, Asn409, Asn413, Asn470, Asn512, Asn543, Asn593, Asn615, and Asn663 are each glycosylated (N-linked (GlcNAc...) asparagine). An intrachain disulfide couples Cys450 to Cys531. The cysteines at positions 573 and 626 are disulfide-linked. Cys672 and Cys721 are oxidised to a cystine. Residues 750–770 (ITLTCTCVAATLFWLLLTLFI) traverse the membrane as a helical segment. Topologically, residues 771-1327 (RKLKRPYFSE…SVVHYSQPSI (557 aa)) are cytoplasmic. Residues 819–1151 (LKLGKSLGHG…ELVKRLGDLL (333 aa)) enclose the Protein kinase domain. Residues 825-833 (LGHGAFGKV) and Lys853 contribute to the ATP site. The disordered stretch occupies residues 950–971 (ASVTSSESFASSGFQEDKSLSD). Residues 951 to 961 (SVTSSESFASS) show a composition bias toward low complexity. Asp1015 acts as the Proton acceptor in catalysis. Phosphotyrosine; by autocatalysis is present on residues Tyr1046, Tyr1162, Tyr1202, Tyr1231, Tyr1316, and Tyr1322.

It belongs to the protein kinase superfamily. Tyr protein kinase family. CSF-1/PDGF receptor subfamily. Interacts with VEGFA, VEGFB and PGF. Monomer in the absence of bound VEGFA, VEGFB or PGF. Homodimer in the presence of bound VEGFA, VEGFB and PGF. Post-translationally, autophosphorylated on tyrosine residues upon ligand binding.

It is found in the cell membrane. The protein localises to the endosome. The protein resides in the secreted. It carries out the reaction L-tyrosyl-[protein] + ATP = O-phospho-L-tyrosyl-[protein] + ADP + H(+). Its activity is regulated as follows. Present in an inactive conformation in the absence of bound ligand. Binding of VEGFA, VEGFB or PGF leads to dimerization and activation by autophosphorylation on tyrosine residues. Its function is as follows. Tyrosine-protein kinase that acts as a cell-surface receptor for VEGFA, VEGFB and PGF, and plays an essential role in the regulation of angiogenesis, cell survival, cell migration, macrophage function, and chemotaxis. Acts as a positive regulator of postnatal retinal hyaloid vessel regression. Has very high affinity for VEGFA and relatively low protein kinase activity; may function as a negative regulator of VEGFA signaling by limiting the amount of free VEGFA and preventing its binding to KDR. Ligand binding leads to the activation of several signaling cascades. Activation of PLCG1 leads to the production of the cellular signaling molecules diacylglycerol and inositol 1,4,5-trisphosphate and the activation of protein kinase C. Mediates phosphorylation of PIK3R1, the regulatory subunit of phosphatidylinositol 3-kinase, leading to activation of phosphatidylinositol kinase and the downstream signaling pathway. Mediates activation of MAPK1/ERK2, MAPK3/ERK1 and the MAP kinase signaling pathway, as well as of the AKT1 signaling pathway. Phosphorylates PLCG1. Promotes phosphorylation of AKT1 and CBL. In Gallus gallus (Chicken), this protein is Vascular endothelial growth factor receptor 1 (FLT1).